The primary structure comprises 258 residues: Tryptophan synthase alpha chain (258 aa).

Catalysis depends on proton acceptor residues E46 and D57.

The protein belongs to the TrpA family. As to quaternary structure, tetramer of two alpha and two beta chains.

It carries out the reaction (1S,2R)-1-C-(indol-3-yl)glycerol 3-phosphate + L-serine = D-glyceraldehyde 3-phosphate + L-tryptophan + H2O. It participates in amino-acid biosynthesis; L-tryptophan biosynthesis; L-tryptophan from chorismate: step 5/5. The alpha subunit is responsible for the aldol cleavage of indoleglycerol phosphate to indole and glyceraldehyde 3-phosphate. This Phocaeicola vulgatus (strain ATCC 8482 / DSM 1447 / JCM 5826 / CCUG 4940 / NBRC 14291 / NCTC 11154) (Bacteroides vulgatus) protein is Tryptophan synthase alpha chain.